The primary structure comprises 2079 residues: Non-reducing polyketide synthase Dhc5 (2079 aa).

An N-terminal acylcarrier protein transacylase domain (SAT) region spans residues 9–246 (LLFGDVTDPW…DELNIHALQH (238 aa)). A Ketosynthase family 3 (KS3) domain is found at 366–798 (NDGIAIVGMA…GGNACLLLED (433 aa)). Active-site for beta-ketoacyl synthase activity residues include cysteine 543, histidine 678, and histidine 717. The segment at 895–1199 (VFVFTGQGSH…MTHSLQPKTS (305 aa)) is malonyl-CoA:ACP transacylase (MAT) domain. Serine 986 (for acyl/malonyl transferase activity) is an active-site residue. The tract at residues 1268 to 1414 (EPLISTCAQY…DPTRSQVEWD (147 aa)) is N-terminal hotdog fold. Positions 1268–1584 (EPLISTCAQY…YQELPRATWK (317 aa)) constitute a PKS/mFAS DH domain. The product template (PT) domain stretch occupies residues 1304-1581 (MDGHKMQGIG…DIRYQELPRA (278 aa)). Positions 1435 to 1584 (RGHRMQPEVF…YQELPRATWK (150 aa)) are C-terminal hotdog fold. The interval 1613–1639 (RELQQPSSATVPAQETTIDEPEQQEGE) is disordered. Polar residues predominate over residues 1615–1628 (LQQPSSATVPAQET). The Carrier domain maps to 1641–1718 (AAGARLFNAI…DLRKEFRANE (78 aa)). An O-(pantetheine 4'-phosphoryl)serine modification is found at serine 1678. The disordered stretch occupies residues 1721-1784 (VENPRFSATP…EQKRPVKIDD (64 aa)). The span at 1727-1757 (SATPSSAEASIPSSPSSLAHPMSDSASSLSP) shows a compositional bias: low complexity. Over residues 1758 to 1784 (SDREEALPLERQSMTKREQKRPVKIDD) the composition is skewed to basic and acidic residues. The segment at 1812-2057 (ADGTGTIATY…LSVAGDHLDL (246 aa)) is thioesterase (TE) domain. Catalysis depends on histidine 2064, which acts as the For thioesterase activity.

Its pathway is mycotoxin biosynthesis. Highly reducing polyketide synthase; part of the gene cluster that mediates the biosynthesis of 10,11-dehydrocurvularin, a prevalent fungal phytotoxin with heat shock response and immune-modulatory activities. The highly reducing polyketide synthase Dhc3 is responsible for biosynthesis up to the tetraketide stage. The non-reducing polyketide synthase Dhc5 then conducts four additional chain extension cycles, producing the unreduced part of the nascent octaketide from C-1 to C-8 in 10,11-dehydrocurvularin. The chain is Non-reducing polyketide synthase Dhc5 from Alternaria cinerariae.